The primary structure comprises 432 residues: MESQQLMACAILVIVLVGIFGNSLSFILFSRPHMRSSSVNVLLCALSFFDFSLLTLSIPIFVIPNLDLWANDLSLSTYMAYILKLIYPINLMMQTCSVYIMVMITLERWVAVCRPLQVRVWCTPRKSRNAILVIIVSAFLYNFVRFFEYRFVVTESGALYEKWLRDPGKHRWYYVGYYTILYIVTHFLVPFSVMAFANGHVIVAMCKLSKTRQMLTRQQQREQSTTVMLLIVTFVFAICNTLPFLLNVSESIFPTLFQDESTRGLAYWLNDLSNLLVVLNSGTTFIIYFTFSEKYRQTLVFILKNGCCATVSDYNNYTAMSRTASMRISSETGGQIQRQGSKMSNSSRSSDVLLKPIYMQKRSERFSSEYNERTCKHLAPFEEHKLPKLPSEKRKKKLHKMSAVEHRGMPEITITFSEDLPDGEPDSPCQPC.

Residues 1–8 lie on the Extracellular side of the membrane; it reads MESQQLMA. The chain crosses the membrane as a helical span at residues 9–29; that stretch reads CAILVIVLVGIFGNSLSFILF. The Cytoplasmic segment spans residues 30–42; that stretch reads SRPHMRSSSVNVL. Residues 43-63 form a helical membrane-spanning segment; sequence LCALSFFDFSLLTLSIPIFVI. Residues 64 to 84 lie on the Extracellular side of the membrane; it reads PNLDLWANDLSLSTYMAYILK. The chain crosses the membrane as a helical span at residues 85–105; sequence LIYPINLMMQTCSVYIMVMIT. Topologically, residues 106–128 are cytoplasmic; it reads LERWVAVCRPLQVRVWCTPRKSR. The chain crosses the membrane as a helical span at residues 129–149; that stretch reads NAILVIIVSAFLYNFVRFFEY. Residues 150-176 are Extracellular-facing; it reads RFVVTESGALYEKWLRDPGKHRWYYVG. The chain crosses the membrane as a helical span at residues 177–197; that stretch reads YYTILYIVTHFLVPFSVMAFA. Topologically, residues 198–225 are cytoplasmic; it reads NGHVIVAMCKLSKTRQMLTRQQQREQST. Residues 226-246 traverse the membrane as a helical segment; it reads TVMLLIVTFVFAICNTLPFLL. At 247–271 the chain is on the extracellular side; the sequence is NVSESIFPTLFQDESTRGLAYWLND. The helical transmembrane segment at 272 to 292 threads the bilayer; sequence LSNLLVVLNSGTTFIIYFTFS. The Cytoplasmic portion of the chain corresponds to 293–432; it reads EKYRQTLVFI…GEPDSPCQPC (140 aa). Disordered regions lie at residues 328–349 and 388–411; these read ISSE…SSRS and KLPS…GMPE.

This sequence belongs to the G-protein coupled receptor 1 family. In terms of tissue distribution, expressed in a subset of neurons in the head, midbody, and tail, including AIY, ASI, BAG, URA, CAN, I6, PVQ, DVA, RIM, and VC, and in the anal sphincter and intestinal muscles. Expression from the ASI neurons is involved in promoting arousal.

The protein localises to the cell membrane. Functionally, G-protein coupled receptor for flp-2 neuropeptides. May act through the G(q) alpha type of G proteins. Involved in mediating arousal from the sleep-like state called lethargus, which occurs during molting between larval and adult stages, in part by regulating touch sensitivity, and working in concert with neuropeptide pdf-1. The polypeptide is FMRFamide peptide receptor frpr-18 (Caenorhabditis elegans).